Reading from the N-terminus, the 312-residue chain is Small ribosomal subunit biogenesis GTPase RsgA (312 aa).

Positions 86–245 (QSFLKRPAVA…LADTPGFNRP (160 aa)) constitute a CP-type G domain. GTP-binding positions include 135–138 (TKID) and 187–195 (GPSGVGKTS). Residues cysteine 270, cysteine 275, histidine 277, and cysteine 283 each contribute to the Zn(2+) site.

Belongs to the TRAFAC class YlqF/YawG GTPase family. RsgA subfamily. As to quaternary structure, monomer. Associates with 30S ribosomal subunit, binds 16S rRNA. The cofactor is Zn(2+).

Its subcellular location is the cytoplasm. One of several proteins that assist in the late maturation steps of the functional core of the 30S ribosomal subunit. Helps release RbfA from mature subunits. May play a role in the assembly of ribosomal proteins into the subunit. Circularly permuted GTPase that catalyzes slow GTP hydrolysis, GTPase activity is stimulated by the 30S ribosomal subunit. The chain is Small ribosomal subunit biogenesis GTPase RsgA from Prochlorococcus marinus (strain NATL2A).